A 212-amino-acid polypeptide reads, in one-letter code: Protein-L-isoaspartate O-methyltransferase (212 aa).

Residue serine 56 is part of the active site.

This sequence belongs to the methyltransferase superfamily. L-isoaspartyl/D-aspartyl protein methyltransferase family.

The protein resides in the cytoplasm. It catalyses the reaction [protein]-L-isoaspartate + S-adenosyl-L-methionine = [protein]-L-isoaspartate alpha-methyl ester + S-adenosyl-L-homocysteine. Catalyzes the methyl esterification of L-isoaspartyl residues in peptides and proteins that result from spontaneous decomposition of normal L-aspartyl and L-asparaginyl residues. It plays a role in the repair and/or degradation of damaged proteins. The polypeptide is Protein-L-isoaspartate O-methyltransferase (Myxococcus xanthus (strain DK1622)).